Here is a 400-residue protein sequence, read N- to C-terminus: Melanization protease 1 (400 aa).

The signal sequence occupies residues 1–22 (MEPHFFFTVLWMLLMGTSSTYA). A propeptide spans 23 to 137 (QEIFGYCRTP…PNCGENFGDR (115 aa)) (activation peptide). In terms of domain architecture, Clip spans 28-91 (YCRTPDENSG…FCFTNVQICC (64 aa)). Cystine bridges form between Cys29-Cys90, Cys39-Cys70, and Cys45-Cys91. Residues 98–120 (NQQPQWGNHPQPTQTTKPTKRSG) are disordered. 3 cysteine pairs are disulfide-bonded: Cys130-Cys268, Cys168-Cys184, and Cys210-Cys220. In terms of domain architecture, Peptidase S1 spans 138 to 399 (VVGGNETTKR…YLNWIENNVR (262 aa)). Asn142 is a glycosylation site (N-linked (GlcNAc...) asparagine). The active-site Charge relay system is the His183. Ca(2+)-binding residues include Glu201, Asp203, Thr206, and Asp209. Catalysis depends on Asp248, which acts as the Charge relay system. Asn296 carries N-linked (GlcNAc...) asparagine glycosylation. 2 disulfide bridges follow: Cys315/Cys332 and Cys342/Cys375. The active-site Charge relay system is Ser346.

This sequence belongs to the peptidase S1 family. CLIP subfamily.

Functionally, serine protease which plays an essential role in the melanization immune response by acting downstream of sp7 to activate prophenoloxidase (PPO1). May function in diverse Hayan-dependent PPO1-activating cascades that are negatively controlled by different serpin proteins; Spn27A in the hemolymph and Spn77BA in the trachea. Regulation of melanization and PPO1 activation appears to be largely independent of the Toll signaling pathway. The polypeptide is Melanization protease 1 (Drosophila melanogaster (Fruit fly)).